The following is a 163-amino-acid chain: MASIAQAAKSLLLKEFASAFALSMRQFFAPKATLNYPHEKGPVSPRFRGEHALRRYPNGEERCIACKLCEAICPAQAITIEAGPRRNDGTRRTVRYDIDMVKCIYCGFCQEACPVDAIVEGPNFEFATETREELYYDKDKLLANGDHWEREIARNIAMDAPYR.

4Fe-4S ferredoxin-type domains lie at 53–83 (LRRYPNGEERCIACKLCEAICPAQAITIEAG) and 94–123 (VRYDIDMVKCIYCGFCQEACPVDAIVEGPN). [4Fe-4S] cluster is bound by residues cysteine 63, cysteine 66, cysteine 69, cysteine 73, cysteine 103, cysteine 106, cysteine 109, and cysteine 113.

Belongs to the complex I 23 kDa subunit family. In terms of assembly, NDH-1 is composed of 14 different subunits. Subunits NuoA, H, J, K, L, M, N constitute the membrane sector of the complex. [4Fe-4S] cluster is required as a cofactor.

Its subcellular location is the cell inner membrane. It carries out the reaction a quinone + NADH + 5 H(+)(in) = a quinol + NAD(+) + 4 H(+)(out). Functionally, NDH-1 shuttles electrons from NADH, via FMN and iron-sulfur (Fe-S) centers, to quinones in the respiratory chain. The immediate electron acceptor for the enzyme in this species is believed to be ubiquinone. Couples the redox reaction to proton translocation (for every two electrons transferred, four hydrogen ions are translocated across the cytoplasmic membrane), and thus conserves the redox energy in a proton gradient. The protein is NADH-quinone oxidoreductase subunit I of Brucella melitensis biotype 1 (strain ATCC 23456 / CCUG 17765 / NCTC 10094 / 16M).